We begin with the raw amino-acid sequence, 166 residues long: Crossover junction endodeoxyribonuclease RuvC (166 aa).

Active-site residues include Asp11, Glu71, and Asp142. Asp11, Glu71, and Asp142 together coordinate Mg(2+).

Belongs to the RuvC family. Homodimer which binds Holliday junction (HJ) DNA. The HJ becomes 2-fold symmetrical on binding to RuvC with unstacked arms; it has a different conformation from HJ DNA in complex with RuvA. In the full resolvosome a probable DNA-RuvA(4)-RuvB(12)-RuvC(2) complex forms which resolves the HJ. Mg(2+) is required as a cofactor.

It localises to the cytoplasm. It carries out the reaction Endonucleolytic cleavage at a junction such as a reciprocal single-stranded crossover between two homologous DNA duplexes (Holliday junction).. The RuvA-RuvB-RuvC complex processes Holliday junction (HJ) DNA during genetic recombination and DNA repair. Endonuclease that resolves HJ intermediates. Cleaves cruciform DNA by making single-stranded nicks across the HJ at symmetrical positions within the homologous arms, yielding a 5'-phosphate and a 3'-hydroxyl group; requires a central core of homology in the junction. The consensus cleavage sequence is 5'-(A/T)TT(C/G)-3'. Cleavage occurs on the 3'-side of the TT dinucleotide at the point of strand exchange. HJ branch migration catalyzed by RuvA-RuvB allows RuvC to scan DNA until it finds its consensus sequence, where it cleaves and resolves the cruciform DNA. The polypeptide is Crossover junction endodeoxyribonuclease RuvC (Maricaulis maris (strain MCS10) (Caulobacter maris)).